Reading from the N-terminus, the 64-residue chain is UPF0337 protein SH2043 (64 aa).

A disordered region spans residues 1-64 (MAEDKFEQAK…DKVKGNNDNK (64 aa)). The segment covering 22–64 (DNKDLEKEGQNDKASGKAKEAVENVKNKANDLIDKVKGNNDNK) has biased composition (basic and acidic residues).

It belongs to the UPF0337 (CsbD) family.

The protein is UPF0337 protein SH2043 of Staphylococcus haemolyticus (strain JCSC1435).